The chain runs to 264 residues: Endoglucanase S (264 aa).

The first 32 residues, 1 to 32 (MQTVNTQPHRIFRVLLPAVFSSLLLSSLTVSA), serve as a signal peptide directing secretion.

It belongs to the glycosyl hydrolase 12 (cellulase H) family.

The catalysed reaction is Endohydrolysis of (1-&gt;4)-beta-D-glucosidic linkages in cellulose, lichenin and cereal beta-D-glucans.. In Pectobacterium parmentieri, this protein is Endoglucanase S (celS).